The following is a 359-amino-acid chain: 3-dehydroquinate synthase (359 aa).

The protein belongs to the archaeal-type DHQ synthase family.

It catalyses the reaction 2-amino-2,3,7-trideoxy-D-lyxo-hept-6-ulosonate + NAD(+) + H2O = 3-dehydroquinate + NH4(+) + NADH + H(+). In terms of biological role, catalyzes the oxidative deamination and cyclization of 2-amino-3,7-dideoxy-D-threo-hept-6-ulosonic acid (ADH) to yield 3-dehydroquinate (DHQ), which is fed into the canonical shikimic pathway of aromatic amino acid biosynthesis. This chain is 3-dehydroquinate synthase, found in Methanosphaera stadtmanae (strain ATCC 43021 / DSM 3091 / JCM 11832 / MCB-3).